Reading from the N-terminus, the 263-residue chain is Endonuclease 8 (263 aa).

Catalysis depends on Pro2, which acts as the Schiff-base intermediate with DNA. Residue Glu3 is the Proton donor of the active site. The active-site Proton donor; for beta-elimination activity is Lys53. Gln70, Arg125, and Asn169 together coordinate DNA. The FPG-type zinc finger occupies 229–263 (KVFHRDGEPCERCGSIIEKTTLSSRPFYWCPGCQH). Catalysis depends on Arg253, which acts as the Proton donor; for delta-elimination activity.

It belongs to the FPG family. It depends on Zn(2+) as a cofactor.

The catalysed reaction is 2'-deoxyribonucleotide-(2'-deoxyribose 5'-phosphate)-2'-deoxyribonucleotide-DNA = a 3'-end 2'-deoxyribonucleotide-(2,3-dehydro-2,3-deoxyribose 5'-phosphate)-DNA + a 5'-end 5'-phospho-2'-deoxyribonucleoside-DNA + H(+). Its function is as follows. Involved in base excision repair of DNA damaged by oxidation or by mutagenic agents. Acts as a DNA glycosylase that recognizes and removes damaged bases. Has a preference for oxidized pyrimidines, such as thymine glycol, 5,6-dihydrouracil and 5,6-dihydrothymine. Has AP (apurinic/apyrimidinic) lyase activity and introduces nicks in the DNA strand. Cleaves the DNA backbone by beta-delta elimination to generate a single-strand break at the site of the removed base with both 3'- and 5'-phosphates. This is Endonuclease 8 from Escherichia coli O17:K52:H18 (strain UMN026 / ExPEC).